Here is a 327-residue protein sequence, read N- to C-terminus: Malate dehydrogenase (327 aa).

NAD(+) contacts are provided by residues G20–G25 and D44. Positions 93 and 99 each coordinate substrate. NAD(+) contacts are provided by residues N106 and V129–N131. Residues N131 and R162 each coordinate substrate. H186 (proton acceptor) is an active-site residue.

It belongs to the LDH/MDH superfamily. MDH type 3 family.

The catalysed reaction is (S)-malate + NAD(+) = oxaloacetate + NADH + H(+). In terms of biological role, catalyzes the reversible oxidation of malate to oxaloacetate. This Nostoc punctiforme (strain ATCC 29133 / PCC 73102) protein is Malate dehydrogenase.